Reading from the N-terminus, the 176-residue chain is Peptidoglycan-associated lipoprotein (176 aa).

Positions 1–21 (MKAGSFYKLGLLVASAVLVAA) are cleaved as a signal peptide. A lipid anchor (N-palmitoyl cysteine) is attached at cysteine 22. A lipid anchor (S-diacylglycerol cysteine) is attached at cysteine 22. Positions 60–176 (YTTQAPHNQL…RVEFIYEATR (117 aa)) constitute an OmpA-like domain.

The protein belongs to the Pal lipoprotein family. As to quaternary structure, the Tol-Pal system is composed of five core proteins: the inner membrane proteins TolA, TolQ and TolR, the periplasmic protein TolB and the outer membrane protein Pal. They form a network linking the inner and outer membranes and the peptidoglycan layer.

It localises to the cell outer membrane. Part of the Tol-Pal system, which plays a role in outer membrane invagination during cell division and is important for maintaining outer membrane integrity. Very strongly associated with the peptidoglycan. This chain is Peptidoglycan-associated lipoprotein, found in Legionella pneumophila.